The primary structure comprises 605 residues: Replication and transcription activator (605 aa).

2 disordered regions span residues 307 to 381 (SLPS…EPEQ) and 447 to 509 (RIRP…EDPD). Low complexity predominate over residues 321 to 338 (SADCGDSSSSSSDSGNSD). Residues 341 to 353 (QSEREEARAEAPR) are compositionally biased toward basic and acidic residues. Basic residues predominate over residues 355 to 364 (RAPKSRRTSR).

Belongs to the herpesviridae Rta family. In terms of assembly, interacts with human ATF7IP protein, leading to promote and regulate host genes in virus-infected cells. Interacts with RNA polymerase III complex; this interaction downregulates small RNA transcription and 5'-pppRNA production.

The protein localises to the host nucleus. It localises to the virion tegument. In terms of biological role, immediate-early transcription factor that controls the initiation of viral lytic gene expression and lytic reactivation from latency. Triggers lytic replication, and initiates a cellular senescence program in epithelial cells. Up-regulates human DCR3/TNFRSF6B by directly binding to its receptor. Globally induces a proteasome-dependent loss of SUMOylated proteins in the host cell and the loss of promeylocytic leukemia nuclear bodies. Improves the stability of the triplex capsid protein TRX1 by reducing the ubiquitination level of the latter. Mediates evasion of inflammasome activation and antiviral responses (T- and NK cell activation) during EBV early lytic infection. This chain is Replication and transcription activator, found in Epstein-Barr virus (strain AG876) (HHV-4).